Consider the following 144-residue polypeptide: Large ribosomal subunit protein uL15 (144 aa).

The disordered stretch occupies residues 1–45; sequence MNLNTLSPDPGSRPSRRRVGRGIGSGLGKTCGKGHKGQKSRAGGY. A compositionally biased stretch (gly residues) spans 21–31; the sequence is RGIGSGLGKTC.

It belongs to the universal ribosomal protein uL15 family. As to quaternary structure, part of the 50S ribosomal subunit.

In terms of biological role, binds to the 23S rRNA. This chain is Large ribosomal subunit protein uL15, found in Legionella pneumophila (strain Corby).